Here is a 241-residue protein sequence, read N- to C-terminus: Uridylate kinase (241 aa).

12–15 (KISG) is an ATP binding site. An involved in allosteric activation by GTP region spans residues 20–25 (GDKGNG). Residue Gly54 participates in UMP binding. 2 residues coordinate ATP: Gly55 and Arg59. UMP-binding positions include Asp74 and 135–142 (TGNPYFST). The ATP site is built by Asn163, Tyr169, and Asp172.

Belongs to the UMP kinase family. In terms of assembly, homohexamer.

The protein localises to the cytoplasm. It carries out the reaction UMP + ATP = UDP + ADP. It participates in pyrimidine metabolism; CTP biosynthesis via de novo pathway; UDP from UMP (UMPK route): step 1/1. Allosterically activated by GTP. Inhibited by UTP. Functionally, catalyzes the reversible phosphorylation of UMP to UDP. This chain is Uridylate kinase, found in Lactobacillus helveticus (strain DPC 4571).